We begin with the raw amino-acid sequence, 353 residues long: Photosystem II D2 protein (353 aa).

At T2 the chain carries N-acetylthreonine. Position 2 is a phosphothreonine (T2). Residues 41-61 (CAYFAVGGWFTGTTFVTSWYT) traverse the membrane as a helical segment. H118 is a binding site for chlorophyll a. A helical transmembrane segment spans residues 125-141 (GFMLRQFELARSVQLRP). Pheophytin a-binding residues include Q130 and N143. A helical membrane pass occupies residues 153–166 (VFVSVFLIYPLGQS). Residue H198 participates in chlorophyll a binding. Residues 208–228 (AALLCAIHGATVENTLFEDGD) form a helical membrane-spanning segment. H215 and F262 together coordinate a plastoquinone. H215 provides a ligand contact to Fe cation. Fe cation is bound at residue H269. The helical transmembrane segment at 279–295 (GLWMSALGVVGLALNLR) threads the bilayer.

This sequence belongs to the reaction center PufL/M/PsbA/D family. In terms of assembly, PSII is composed of 1 copy each of membrane proteins PsbA, PsbB, PsbC, PsbD, PsbE, PsbF, PsbH, PsbI, PsbJ, PsbK, PsbL, PsbM, PsbT, PsbX, PsbY, PsbZ, Psb30/Ycf12, at least 3 peripheral proteins of the oxygen-evolving complex and a large number of cofactors. It forms dimeric complexes. The D1/D2 heterodimer binds P680, chlorophylls that are the primary electron donor of PSII, and subsequent electron acceptors. It shares a non-heme iron and each subunit binds pheophytin, quinone, additional chlorophylls, carotenoids and lipids. There is also a Cl(-1) ion associated with D1 and D2, which is required for oxygen evolution. The PSII complex binds additional chlorophylls, carotenoids and specific lipids. serves as cofactor.

It localises to the plastid. It is found in the chloroplast thylakoid membrane. It carries out the reaction 2 a plastoquinone + 4 hnu + 2 H2O = 2 a plastoquinol + O2. In terms of biological role, photosystem II (PSII) is a light-driven water:plastoquinone oxidoreductase that uses light energy to abstract electrons from H(2)O, generating O(2) and a proton gradient subsequently used for ATP formation. It consists of a core antenna complex that captures photons, and an electron transfer chain that converts photonic excitation into a charge separation. The D1/D2 (PsbA/PsbD) reaction center heterodimer binds P680, the primary electron donor of PSII as well as several subsequent electron acceptors. D2 is needed for assembly of a stable PSII complex. The sequence is that of Photosystem II D2 protein from Ipomoea purpurea (Common morning glory).